Here is a 584-residue protein sequence, read N- to C-terminus: Endoribonuclease YBEY, chloroplastic (584 aa).

The N-terminal 50 residues, 1–50 (MLSRVCPTLRYNRIWSAHAREMPRATLLLLQPNFFHSSPKTALVNRLDVT), are a transit peptide targeting the chloroplast. H240, H244, and H250 together coordinate Zn(2+).

This sequence belongs to the endoribonuclease YbeY family. Zn(2+) is required as a cofactor.

It localises to the plastid. Its subcellular location is the chloroplast stroma. Its function is as follows. Endoribonuclease required for chloroplast ribosomal RNA (rRNA) processing and essential for normal growth and development. May be involved in maturation of both the 5' and 3' ends of 16S, 23S, and 4.5S rRNAs. Cleaves chloroplast rRNAs, mRNAs and tRNAs in vitro. This is Endoribonuclease YBEY, chloroplastic from Arabidopsis thaliana (Mouse-ear cress).